The sequence spans 221 residues: Deoxyribose-phosphate aldolase (221 aa).

Aspartate 89 functions as the Proton donor/acceptor in the catalytic mechanism. Lysine 151 functions as the Schiff-base intermediate with acetaldehyde in the catalytic mechanism. Lysine 180 acts as the Proton donor/acceptor in catalysis.

This sequence belongs to the DeoC/FbaB aldolase family. DeoC type 1 subfamily.

Its subcellular location is the cytoplasm. The catalysed reaction is 2-deoxy-D-ribose 5-phosphate = D-glyceraldehyde 3-phosphate + acetaldehyde. Its pathway is carbohydrate degradation; 2-deoxy-D-ribose 1-phosphate degradation; D-glyceraldehyde 3-phosphate and acetaldehyde from 2-deoxy-alpha-D-ribose 1-phosphate: step 2/2. Functionally, catalyzes a reversible aldol reaction between acetaldehyde and D-glyceraldehyde 3-phosphate to generate 2-deoxy-D-ribose 5-phosphate. This chain is Deoxyribose-phosphate aldolase, found in Brevibacillus brevis (strain 47 / JCM 6285 / NBRC 100599).